Here is a 205-residue protein sequence, read N- to C-terminus: Nucleoside triphosphate pyrophosphatase (205 aa).

Asp76 serves as the catalytic Proton acceptor.

It belongs to the Maf family. Requires a divalent metal cation as cofactor.

It is found in the cytoplasm. It carries out the reaction a ribonucleoside 5'-triphosphate + H2O = a ribonucleoside 5'-phosphate + diphosphate + H(+). The enzyme catalyses a 2'-deoxyribonucleoside 5'-triphosphate + H2O = a 2'-deoxyribonucleoside 5'-phosphate + diphosphate + H(+). Nucleoside triphosphate pyrophosphatase. May have a dual role in cell division arrest and in preventing the incorporation of modified nucleotides into cellular nucleic acids. In Orientia tsutsugamushi (strain Boryong) (Rickettsia tsutsugamushi), this protein is Nucleoside triphosphate pyrophosphatase.